The primary structure comprises 120 residues: Large ribosomal subunit protein bL19 (120 aa).

The protein belongs to the bacterial ribosomal protein bL19 family.

This protein is located at the 30S-50S ribosomal subunit interface and may play a role in the structure and function of the aminoacyl-tRNA binding site. The protein is Large ribosomal subunit protein bL19 of Thermosynechococcus vestitus (strain NIES-2133 / IAM M-273 / BP-1).